The following is a 184-amino-acid chain: Intraflagellar transport protein 22 homolog (184 aa).

GTP contacts are provided by residues glycine 10–threonine 17, aspartate 62–aspartate 66, and lysine 122–glycine 125.

The protein belongs to the small GTPase superfamily. Rab family.

This Xenopus tropicalis (Western clawed frog) protein is Intraflagellar transport protein 22 homolog (ift22).